The chain runs to 574 residues: Serine/arginine repetitive matrix protein 4 (574 aa).

Disordered regions lie at residues 45–217 (LETP…HGGD), 257–291 (IVQN…ITRS), 366–422 (DLIS…SYSL), 454–508 (YCSS…VSSR), and 526–574 (RSRS…RARR). Positions 51–72 (PKDDEEKVKAKDLVTKTHEKNG) are enriched in basic and acidic residues. Composition is skewed to basic residues over residues 73–88 (HIKR…RRAR), 102–120 (PKTK…RHRS), and 128–184 (VRKK…HRKA). Basic and acidic residues predominate over residues 194-217 (NRSEDCEKSGFRDGGRSSDVHGGD). The segment covering 275 to 289 (GNDTSSPPSSKTGIT) has biased composition (polar residues). Basic and acidic residues predominate over residues 366–385 (DLISDRNRSPSHDRYEDGTR). Residues 405 to 422 (RSLSSGRRSYSRSSSYSL) are compositionally biased toward low complexity. A compositionally biased stretch (basic residues) spans 454–477 (YCSSCKSRKHSRRRPSSPMRKRRR). Positions 478–487 (DSPSHLEARR) are enriched in basic and acidic residues. The span at 496-508 (IPYYRPSPSVSSR) shows a compositional bias: low complexity. Basic residues predominate over residues 526 to 539 (RSRSCSRSRSRSHS). Over residues 540–559 (HTYSSYRSYSRSSSWNSLYS) the composition is skewed to low complexity. Residues 560 to 574 (RRSRSRSRSYSRARR) are compositionally biased toward basic residues.

It belongs to the nSR100 family.

It localises to the nucleus. Functionally, splicing factor specifically required for neural cell differentiation. Acts in conjunction with nPTB/PTBP2 by binding directly to its regulated target transcripts and promotes neural-specific exon inclusion in many genes that function in neural cell differentiation. Required to promote the inclusion of neural-specific exon 10 in nPTB/PTBP2, leading to increased expression of neural-specific nPTB/PTBP2. This is Serine/arginine repetitive matrix protein 4 (srrm4) from Danio rerio (Zebrafish).